The chain runs to 423 residues: AP-1 complex subunit mu-2 (423 aa).

The region spanning 168–421 is the MHD domain; sequence KNEVFIDVIE…ITQSGDYQLR (254 aa).

Belongs to the adaptor complexes medium subunit family. Adaptor protein complex 1 (AP-1) is a heterotetramer composed of two large adaptins (gamma-type subunit AP1G1 and beta-type subunit AP1B1), a medium adaptin (mu-type subunit AP1M1 or AP1M2) and a small adaptin (sigma-type subunit AP1S1 or AP1S2 or AP1S3). Interacts with P2X4. Phosphorylation of membrane-bound AP1M1/AP1M2 increases its affinity for sorting signals.

The protein localises to the golgi apparatus. The protein resides in the cytoplasmic vesicle. It is found in the clathrin-coated vesicle membrane. Its function is as follows. Subunit of clathrin-associated adaptor protein complex 1 that plays a role in protein sorting in the trans-Golgi network (TGN) and endosomes. The AP complexes mediate the recruitment of clathrin to membranes and the recognition of sorting signals within the cytosolic tails of transmembrane cargo molecules. This chain is AP-1 complex subunit mu-2 (Ap1m2), found in Rattus norvegicus (Rat).